A 20-amino-acid chain; its full sequence is Protein PR-L1 (20 aa).

Belongs to the BetVI family.

In Lupinus luteus (European yellow lupine), this protein is Protein PR-L1.